The sequence spans 361 residues: Phosphate acyltransferase (361 aa).

Residues 340 to 361 form a disordered region; that stretch reads VPADGAATEQGPTPRRIAPPRT.

This sequence belongs to the PlsX family. As to quaternary structure, homodimer. Probably interacts with PlsY.

The protein resides in the cytoplasm. The enzyme catalyses a fatty acyl-[ACP] + phosphate = an acyl phosphate + holo-[ACP]. It participates in lipid metabolism; phospholipid metabolism. Catalyzes the reversible formation of acyl-phosphate (acyl-PO(4)) from acyl-[acyl-carrier-protein] (acyl-ACP). This enzyme utilizes acyl-ACP as fatty acyl donor, but not acyl-CoA. The polypeptide is Phosphate acyltransferase (Anaeromyxobacter dehalogenans (strain 2CP-1 / ATCC BAA-258)).